Here is a 63-residue protein sequence, read N- to C-terminus: Protein sigN172 (63 aa).

This chain is Protein sigN172, found in Dictyostelium discoideum (Social amoeba).